The following is a 288-amino-acid chain: Programmed cell death protein 1 (288 aa).

Residues 1 to 24 (MWVRQVPWSFTWAVLQLSWQSGWL) form the signal peptide. The Extracellular segment spans residues 25–169 (LEVPNGPWRS…PKPEGRFQGM (145 aa)). The Ig-like V-type domain occupies 31–139 (PWRSLTFYPA…PKAKIEESPG (109 aa)). N-linked (GlcNAc...) asparagine glycosylation is found at Asn-49, Asn-58, Asn-74, and Asn-116. Residues Cys-54 and Cys-123 are joined by a disulfide bond. The interaction with CD274/PDCD1L1 stretch occupies residues 70-77 (LSPSNQTE). The chain crosses the membrane as a helical span at residues 170-190 (VIGIMSALVGIPVLLLLAWAL). Over 191–288 (AVFCSTSMSE…HEDGHCSWPL (98 aa)) the chain is Cytoplasmic. Residues 223-228 (VAYEEL) carry the ITIM motif motif. Tyr-225 carries the phosphotyrosine modification. A Glycyl lysine isopeptide (Lys-Gly) (interchain with G-Cter in ubiquitin) cross-link involves residue Lys-235. A Phosphothreonine; by MAPK3 modification is found at Thr-236. Residues 247–251 (EYATI) carry the ITSM motif motif. A Phosphotyrosine modification is found at Tyr-248. The interval 263–288 (GRRGSADGLQGPRPPRHEDGHCSWPL) is disordered. Over residues 277–288 (PRHEDGHCSWPL) the composition is skewed to basic and acidic residues.

As to quaternary structure, monomer. Interacts with CD274/PDCD1L1. Interacts with CD273/PDCD1LG2. Interacts with FBXO38; leading to ubiquitination and degradation by the proteasome. In terms of processing, ubiquitinated at Lys-235 by the SCF(FBXO38) complex, leading to its proteasomal degradation. Ubiquitinated via 'Lys-48'-linked polyubiquitin chains. Deubiquitinated and thus stabilized by USP5. Tyrosine phosphorylated at Tyr-225 (within ITIM motif) and Tyr-248 (ITSM motif) upon ligand binding. Phosphorylation at Tyr-248 promotes the recruitment of the protein tyrosine phosphatase PTPN11/SHP-2 that mediates dephosphorylation of key TCR proximal signaling molecules, such as ZAP70, PRKCQ/PKCtheta and CD247/CD3zeta. Phosphorylation at Thr-236 promotes the recruitment of the deubiquitinase USP5. In terms of tissue distribution, thymus-specific.

It localises to the cell membrane. In terms of biological role, inhibitory receptor on antigen activated T-cells that plays a critical role in induction and maintenance of immune tolerance to self. Delivers inhibitory signals upon binding to ligands, such as CD274/PDCD1L1 and CD273/PDCD1LG2. Following T-cell receptor (TCR) engagement, PDCD1 associates with CD3-TCR in the immunological synapse and directly inhibits T-cell activation. Suppresses T-cell activation through the recruitment of PTPN11/SHP-2: following ligand-binding, PDCD1 is phosphorylated within the ITSM motif, leading to the recruitment of the protein tyrosine phosphatase PTPN11/SHP-2 that mediates dephosphorylation of key TCR proximal signaling molecules, such as ZAP70, PRKCQ/PKCtheta and CD247/CD3zeta. The PDCD1-mediated inhibitory pathway is exploited by tumors to attenuate anti-tumor immunity and facilitate tumor survival. The sequence is that of Programmed cell death protein 1 from Mus musculus (Mouse).